The sequence spans 627 residues: uncharacterized protein (627 aa).

Disordered stretches follow at residues 141 to 187 (LRYP…TPPS) and 490 to 510 (ENEN…GPRT). Polar residues predominate over residues 491 to 510 (NENTNGSANNSTYTNGGPRT). Position 559 is a phosphoserine (Ser-559).

This is an uncharacterized protein from Saccharomyces cerevisiae (strain ATCC 204508 / S288c) (Baker's yeast).